A 184-amino-acid polypeptide reads, in one-letter code: MDFIKEQYNSLVLDLRKTFRNKRDGLSHILNVICLLLNALMIWKLLVVFTGCESPVVVVLSGSMEPGYYRGDTLALYHPPKIHAGDVVVYQINGRDIPIVHRILSLHTSKDNKFHLLSKGDNNNIDDRGLYDPHQYWLENEHVLGLSVGYTPYIGILTIWINEYPVVKWAIVSIMLIMILMGYE.

Topologically, residues Met1–His28 are cytoplasmic. The chain crosses the membrane as a helical; Signal-anchor for type II membrane protein span at residues Ile29–Phe49. Topologically, residues Thr50 to Glu184 are lumenal. Active-site charge relay system residues include Ser63, His101, and Asp127. The C-terminal short (CTS) helix stretch occupies residues Ala170–Met181.

This sequence belongs to the peptidase S26B family. As to quaternary structure, component of the signal peptidase complex (SPC) composed of a catalytic subunit SEC11/SPC21 and three accessory subunits SPC25, SPC3/SPC22, SPC1/SPC12. Within the complex, interacts with SPC25. The complex induces a local thinning of the ER membrane which is used to measure the length of the signal peptide (SP) h-region of protein substrates. This ensures the selectivity of the complex towards h-regions shorter than 18-20 amino acids. The complex interacts with the SEC61 channel-forming translocon complex and is involved in the import of classical signal sequence-containing proteins. In terms of processing, phosphorylated. Phosphorylation increases catalytic activity.

It localises to the endoplasmic reticulum membrane. It catalyses the reaction Cleavage of hydrophobic, N-terminal signal or leader sequences from secreted and periplasmic proteins.. With respect to regulation, phosphorylation increases catalytic activity. Ca(2+) slightly increases catalytic activity in vitro. Functionally, catalytic component of the signal peptidase complex (SPC) which catalyzes the cleavage of N-terminal signal sequences from nascent proteins as they are translocated into the lumen of the endoplasmic reticulum. Specifically cleaves N-terminal signal peptides that contain a hydrophobic alpha-helix (h-region) shorter than 18-20 amino acids. The chain is Signal peptidase complex catalytic subunit SEC11 from Plasmodium falciparum (isolate 3D7).